The following is a 565-amino-acid chain: Perivitellin-2 67 kDa subunit (565 aa).

The N-terminal stretch at 1 to 26 (MSQLRWWVVSQLLLLIVVCILDHSEG) is a signal peptide. The MACPF domain occupies 27 to 340 (ARVCPKIVPG…AKVANLDRLT (314 aa)).

In terms of assembly, perivitellin-2 is a heterooctamer of 4 identical 98 kDa heterodimers, each composed of one 31 kDa and one 67 kDa subunits. The 98 kDa heterodimer subunits are held together by disulfide bridges while the heterodimers are assembled into the native perivitellin-2 octamer by non-covalent forces. Post-translationally, glycosylated. Contains four O-linked and one N-linked oligosaccharide bonds. The protein contains 2.5% of carbohydrates (high levels of mannose, galactose, and NAcGlucosamine, and small amounts of NacGalactosamine). PV2 is a very high density lipoprotein (VHDL). It contains 3.75% of lipids. The major lipid classes are free sterols and phospholipids and also have significant quantities of energy-providing triacylglycerides and free fatty acids. Produced by albumen secretory cells. Found in developing eggs.

It is found in the secreted. It localises to the target cell membrane. The egg defensive protein perivitellin-2 is a pore-forming two-subunit glycoprotein that affects both the nervous and digestive systems of mammals. In addition, it is a source of both structural and energetic molecules during embryonic development. The tachylectin subunit (31 kDa) binds target membranes while the MACPF subunit (67 kDa) disrupts lipid bilayers forming large pores altering the plasma membrance conductance. Both in vivo and in vitro, the protein shows wide pH range stability and is resistant to enzymatic proteolysis from gastrointestinal environments. It specifically binds mature enterocytes but does not cause cell disruption on caco-2 (human colorectal adenocarcinoma cells) or rat intestinal cells. After oral administration to mice, it binds enterocytes and induces large dose-dependent morphological changes on their small intestine mucosa, reducing the absorptive surface. Additionally, it is detected in the Peyer's patches where it activates lymphoid follicles and triggers apoptosis. The toxin can also traverse the intestinal barrier and induce oral adaptive immunity with evidence of circulating antibody response. The toxin also shows hemagglutination properties thanks to the tachylectin subunit, but does not show hemolytic activity. In addition to enterotoxin activity, the toxin also acts as a neurotoxin, since an intraperitoneal injection induces paralysis of the mice rear limbs, followed by death. This Pomacea canaliculata (Golden apple snail) protein is Perivitellin-2 67 kDa subunit.